We begin with the raw amino-acid sequence, 323 residues long: tRNA dimethylallyltransferase (323 aa).

16–23 (GPTASGKT) serves as a coordination point for ATP. 18-23 (TASGKT) provides a ligand contact to substrate. Interaction with substrate tRNA stretches follow at residues 41–44 (DSAL), 165–169 (QRIQR), 253–258 (RCVGYR), and 286–293 (KRQITWLR).

Belongs to the IPP transferase family. In terms of assembly, monomer. Requires Mg(2+) as cofactor.

It catalyses the reaction adenosine(37) in tRNA + dimethylallyl diphosphate = N(6)-dimethylallyladenosine(37) in tRNA + diphosphate. Functionally, catalyzes the transfer of a dimethylallyl group onto the adenine at position 37 in tRNAs that read codons beginning with uridine, leading to the formation of N6-(dimethylallyl)adenosine (i(6)A). The chain is tRNA dimethylallyltransferase from Ralstonia nicotianae (strain ATCC BAA-1114 / GMI1000) (Ralstonia solanacearum).